The chain runs to 238 residues: Proenkephalin-A (238 aa).

The N-terminal stretch at Met-1–Thr-25 is a signal peptide. Intrachain disulfides connect Cys-27–Cys-50, Cys-31–Cys-54, and Cys-34–Cys-66. The tract at residues Gln-76–His-103 is disordered. 3 propeptides span residues Ser-124–Val-167, Ala-177–Leu-195, and Val-206–Gln-230.

It belongs to the opioid neuropeptide precursor family. Expressed by the venom gland. Moderately expressed in the venom gland transcriptome.

The protein resides in the secreted. Its function is as follows. Met-enkephalins compete with and mimic the effects of opiate drugs. They play a role in a number of physiologic functions, including pain perception and responses to stress. Enkephalin peptides found in Meiacanthus fangblennies induce physiological effects via their interaction with delta-type opioid receptors (OPRD1) (tested on M.grammistes). Therefore, finding a proenkephalin sequence in M.atrodorsalis venom suggests that this protein act in the same manner. The protein is Proenkephalin-A of Meiacanthus atrodorsalis (Forktail blenny).